Consider the following 123-residue polypeptide: Putative hypoxanthine phosphoribosyltransferase (123 aa).

Its function is as follows. May play a role in purine salvage. This Methanosarcina mazei (strain ATCC BAA-159 / DSM 3647 / Goe1 / Go1 / JCM 11833 / OCM 88) (Methanosarcina frisia) protein is Putative hypoxanthine phosphoribosyltransferase.